Reading from the N-terminus, the 109-residue chain is Parvalbumin beta (109 aa).

The residue at position 1 (Ser-1) is an N-acetylserine. 2 consecutive EF-hand domains span residues 38 to 73 (KTPD…FASS) and 77 to 109 (LTDK…VKEA). Residues Asp-51, Asp-53, Ser-55, Phe-57, Glu-59, Glu-62, Asp-90, Asp-92, Asp-94, Lys-96, and Glu-101 each coordinate Ca(2+).

Belongs to the parvalbumin family.

In muscle, parvalbumin is thought to be involved in relaxation after contraction. It binds two calcium ions. The sequence is that of Parvalbumin beta from Opsanus tau (Oyster toadfish).